The sequence spans 58 residues: MAVPKKRKSKMKTRLRKAQWKSEASREAAKALSKAKTVIKSLLAANSANLESNSENSN.

The segment covering 1–19 has biased composition (basic residues); that stretch reads MAVPKKRKSKMKTRLRKAQ. Residues 1-25 form a disordered region; that stretch reads MAVPKKRKSKMKTRLRKAQWKSEAS.

It belongs to the bacterial ribosomal protein bL32 family.

Its subcellular location is the plastid. It is found in the chloroplast. This Chlorella vulgaris (Green alga) protein is Large ribosomal subunit protein bL32c (rpl32).